A 250-amino-acid polypeptide reads, in one-letter code: Diaminopimelate epimerase (250 aa).

2 residues coordinate substrate: N11 and N60. C69 serves as the catalytic Proton donor. Substrate is bound by residues 70 to 71, N164, and 182 to 183; these read GN and ER. The active-site Proton acceptor is the C192. Residue 193 to 194 coordinates substrate; that stretch reads GT.

Belongs to the diaminopimelate epimerase family. Homodimer.

Its subcellular location is the cytoplasm. The catalysed reaction is (2S,6S)-2,6-diaminopimelate = meso-2,6-diaminopimelate. The protein operates within amino-acid biosynthesis; L-lysine biosynthesis via DAP pathway; DL-2,6-diaminopimelate from LL-2,6-diaminopimelate: step 1/1. Its function is as follows. Catalyzes the stereoinversion of LL-2,6-diaminopimelate (L,L-DAP) to meso-diaminopimelate (meso-DAP), a precursor of L-lysine and an essential component of the bacterial peptidoglycan. This is Diaminopimelate epimerase from Nitratiruptor sp. (strain SB155-2).